Consider the following 332-residue polypeptide: Cell division protein ZipA (332 aa).

Over 1 to 6 (MMQDLR) the chain is Periplasmic. Residues 7–27 (LILIVVGAIAIIALLLHGLWT) traverse the membrane as a helical segment. Residues 28 to 332 (SRKERSSLFR…RIRDVLKANA (305 aa)) lie on the Cytoplasmic side of the membrane. Over residues 40–51 (PVKRAKKARDET) the composition is skewed to basic and acidic residues. Positions 40-189 (PVKRAKKARD…VQPAPQQPAE (150 aa)) are disordered. Low complexity predominate over residues 76-88 (SFDSASVDSSSFD). Residues 93–105 (AREDVRSEAKSPF) show a composition bias toward basic and acidic residues.

It belongs to the ZipA family. Interacts with FtsZ via their C-terminal domains.

Its subcellular location is the cell inner membrane. In terms of biological role, essential cell division protein that stabilizes the FtsZ protofilaments by cross-linking them and that serves as a cytoplasmic membrane anchor for the Z ring. Also required for the recruitment to the septal ring of downstream cell division proteins. The sequence is that of Cell division protein ZipA from Pectobacterium atrosepticum (strain SCRI 1043 / ATCC BAA-672) (Erwinia carotovora subsp. atroseptica).